The chain runs to 330 residues: Aspartate--ammonia ligase (330 aa).

The protein belongs to the class-II aminoacyl-tRNA synthetase family. AsnA subfamily. In terms of assembly, homodimer.

Its subcellular location is the cytoplasm. It catalyses the reaction L-aspartate + NH4(+) + ATP = L-asparagine + AMP + diphosphate + H(+). It functions in the pathway amino-acid biosynthesis; L-asparagine biosynthesis; L-asparagine from L-aspartate (ammonia route): step 1/1. The sequence is that of Aspartate--ammonia ligase from Salmonella typhimurium (strain LT2 / SGSC1412 / ATCC 700720).